Reading from the N-terminus, the 193-residue chain is Annexin-2 receptor (193 aa).

The segment covering 78-87 (QSTLEPSTAK) has biased composition (polar residues). Positions 78 to 111 (QSTLEPSTAKPTEFSWPGTQKQQEAPVEEVGQAE) are disordered.

Widely expressed. Highly expressed in lymphocytes. Expressed in both resting CD4(+) and CD8(+) T-cells.

Its function is as follows. May act as a receptor for annexin II on marrow stromal cells to induce osteoclast formation. The polypeptide is Annexin-2 receptor (ANXA2R) (Homo sapiens (Human)).